The following is a 377-amino-acid chain: Queuine tRNA-ribosyltransferase (377 aa).

Aspartate 91 functions as the Proton acceptor in the catalytic mechanism. Substrate is bound by residues 91–95, aspartate 145, glutamine 189, and glycine 216; that span reads DSGGF. Positions 247-253 are RNA binding; the sequence is GVGKPED. The active-site Nucleophile is aspartate 266. Residues 271-275 are RNA binding; important for wobble base 34 recognition; it reads TRNAR. Cysteine 304, cysteine 306, cysteine 309, and histidine 335 together coordinate Zn(2+).

This sequence belongs to the queuine tRNA-ribosyltransferase family. In terms of assembly, homodimer. Within each dimer, one monomer is responsible for RNA recognition and catalysis, while the other monomer binds to the replacement base PreQ1. Requires Zn(2+) as cofactor.

It carries out the reaction 7-aminomethyl-7-carbaguanine + guanosine(34) in tRNA = 7-aminomethyl-7-carbaguanosine(34) in tRNA + guanine. It functions in the pathway tRNA modification; tRNA-queuosine biosynthesis. Its function is as follows. Catalyzes the base-exchange of a guanine (G) residue with the queuine precursor 7-aminomethyl-7-deazaguanine (PreQ1) at position 34 (anticodon wobble position) in tRNAs with GU(N) anticodons (tRNA-Asp, -Asn, -His and -Tyr). Catalysis occurs through a double-displacement mechanism. The nucleophile active site attacks the C1' of nucleotide 34 to detach the guanine base from the RNA, forming a covalent enzyme-RNA intermediate. The proton acceptor active site deprotonates the incoming PreQ1, allowing a nucleophilic attack on the C1' of the ribose to form the product. After dissociation, two additional enzymatic reactions on the tRNA convert PreQ1 to queuine (Q), resulting in the hypermodified nucleoside queuosine (7-(((4,5-cis-dihydroxy-2-cyclopenten-1-yl)amino)methyl)-7-deazaguanosine). The sequence is that of Queuine tRNA-ribosyltransferase from Vibrio parahaemolyticus serotype O3:K6 (strain RIMD 2210633).